Reading from the N-terminus, the 316-residue chain is MTKEFHHVTVLLHETIDMLDVKPEGIYVDATLGGAGHSEYLLSKLSEKGHLYAFDQDQNAIDNAQKRLAPYIEKGMVTFIKDNFRHLQARLREAGVQEIDGICYDLGVSSPQLDQRERGFSYKKDAPLDMRMNQDASLTAYEVVNHYDYHDLVRIFFKYGEDKFSKQIARKIEQAREVKPIETTTELAEIIKLVKPAKELKKKGHPAKQIFQAIRIEVNDELGAADESIQQAMDMLALDGRISVITFHSLEDRLTKQLFKEASTVEVPKGLPFIPDDLKPKMELVSRKPILPSAEELEANNRSHSAKLRVVRKIHK.

S-adenosyl-L-methionine contacts are provided by residues 35–37, Asp55, Phe84, Asp105, and Gln112; that span reads AGH.

Belongs to the methyltransferase superfamily. RsmH family.

The protein resides in the cytoplasm. The catalysed reaction is cytidine(1402) in 16S rRNA + S-adenosyl-L-methionine = N(4)-methylcytidine(1402) in 16S rRNA + S-adenosyl-L-homocysteine + H(+). Specifically methylates the N4 position of cytidine in position 1402 (C1402) of 16S rRNA. This is Ribosomal RNA small subunit methyltransferase H from Streptococcus pneumoniae (strain JJA).